A 191-amino-acid polypeptide reads, in one-letter code: Glutathione-dependent formaldehyde-activating enzyme (191 aa).

In terms of domain architecture, CENP-V/GFA spans Phe-22–Asp-169. Zn(2+) contacts are provided by Cys-29, Cys-31, Cys-50, Cys-52, Cys-55, Cys-97, and Cys-100.

The protein belongs to the Gfa family. Zn(2+) is required as a cofactor.

It catalyses the reaction S-(hydroxymethyl)glutathione = glutathione + formaldehyde. It participates in one-carbon metabolism; formaldehyde degradation; formate from formaldehyde (glutathione route): step 1/3. Functionally, catalyzes the condensation of formaldehyde and glutathione to S-hydroxymethylglutathione. The protein is Glutathione-dependent formaldehyde-activating enzyme of Xanthomonas campestris pv. campestris (strain 8004).